A 987-amino-acid polypeptide reads, in one-letter code: Ephrin type-B receptor 4 (987 aa).

Positions M1–A15 are cleaved as a signal peptide. Residues L16–A539 lie on the Extracellular side of the membrane. An Eph LBD domain is found at E17–V202. Cystine bridges form between C61–C184 and C97–C107. N203, N335, and N426 each carry an N-linked (GlcNAc...) asparagine glycan. Fibronectin type-III domains are found at residues P323–E432 and A436–D529. The chain crosses the membrane as a helical span at residues L540–V560. Topologically, residues L561–Y987 are cytoplasmic. Residues V615–L899 form the Protein kinase domain. ATP contacts are provided by residues I621 to V629 and K647. Catalysis depends on D740, which acts as the Proton acceptor. Phosphoserine is present on residues S769, S770, S911, and S943. In terms of domain architecture, SAM spans S907–Q971. The segment at V965–Y987 is disordered. A Phosphothreonine modification is found at T976. The segment covering T976–Y987 has biased composition (gly residues). Positions P985–Y987 match the PDZ-binding motif. Y987 carries the post-translational modification Phosphotyrosine.

The protein belongs to the protein kinase superfamily. Tyr protein kinase family. Ephrin receptor subfamily. As to quaternary structure, heterotetramer upon binding of the ligand. The heterotetramer is composed of an ephrin dimer and a receptor dimer. Oligomerization is probably required to induce biological responses. Interacts with RASA1; the interaction depends on EPHB4 tyrosine-phosphorylation. Post-translationally, phosphorylated; autophosphorylation is stimulated by EFNB2. In terms of tissue distribution, abundantly expressed in placenta but also detected in kidney, liver, lung, pancreas, skeletal muscle and heart. Expressed in primitive and myeloid, but not lymphoid, hematopoietic cells. Also observed in cell lines derived from liver, breast, colon, lung, melanocyte and cervix.

The protein resides in the cell membrane. It catalyses the reaction L-tyrosyl-[protein] + ATP = O-phospho-L-tyrosyl-[protein] + ADP + H(+). Receptor tyrosine kinase which binds promiscuously transmembrane ephrin-B family ligands residing on adjacent cells, leading to contact-dependent bidirectional signaling into neighboring cells. The signaling pathway downstream of the receptor is referred to as forward signaling while the signaling pathway downstream of the ephrin ligand is referred to as reverse signaling. Together with its cognate ligand/functional ligand EFNB2 it is involved in the regulation of cell adhesion and migration, and plays a central role in heart morphogenesis, angiogenesis and blood vessel remodeling and permeability. EPHB4-mediated forward signaling controls cellular repulsion and segregation from EFNB2-expressing cells. The sequence is that of Ephrin type-B receptor 4 (EPHB4) from Homo sapiens (Human).